The chain runs to 334 residues: Holliday junction branch migration complex subunit RuvB (334 aa).

The large ATPase domain (RuvB-L) stretch occupies residues 1 to 181 (MSEFLTPERT…GIILELDFYT (181 aa)). Residues L19 and R20 each coordinate ADP. 3 residues coordinate ATP: E26, F27, and I28. F27, I28, G61, L62, G63, K64, T65, and T66 together coordinate ADP. ATP-binding residues include L62 and G63. Residues 127 to 129 (EDF) and R170 contribute to the ATP site. The ADP site is built by Y180, P216, and R217. The small ATPAse domain (RuvB-S) stretch occupies residues 182-255 (VKELKEIIKR…TMEVLNIDDE (74 aa)). Residue P216 coordinates ATP. A head domain (RuvB-H) region spans residues 256 to 334 (GLDEFDRKIL…KYEVPENRLF (79 aa)). DNA contacts are provided by R309 and R314.

The protein belongs to the RuvB family. As to quaternary structure, homohexamer. Forms an RuvA(8)-RuvB(12)-Holliday junction (HJ) complex. HJ DNA is sandwiched between 2 RuvA tetramers; dsDNA enters through RuvA and exits via RuvB. An RuvB hexamer assembles on each DNA strand where it exits the tetramer. Each RuvB hexamer is contacted by two RuvA subunits (via domain III) on 2 adjacent RuvB subunits; this complex drives branch migration. In the full resolvosome a probable DNA-RuvA(4)-RuvB(12)-RuvC(2) complex forms which resolves the HJ.

Its subcellular location is the cytoplasm. It catalyses the reaction ATP + H2O = ADP + phosphate + H(+). In terms of biological role, the RuvA-RuvB-RuvC complex processes Holliday junction (HJ) DNA during genetic recombination and DNA repair, while the RuvA-RuvB complex plays an important role in the rescue of blocked DNA replication forks via replication fork reversal (RFR). RuvA specifically binds to HJ cruciform DNA, conferring on it an open structure. The RuvB hexamer acts as an ATP-dependent pump, pulling dsDNA into and through the RuvAB complex. RuvB forms 2 homohexamers on either side of HJ DNA bound by 1 or 2 RuvA tetramers; 4 subunits per hexamer contact DNA at a time. Coordinated motions by a converter formed by DNA-disengaged RuvB subunits stimulates ATP hydrolysis and nucleotide exchange. Immobilization of the converter enables RuvB to convert the ATP-contained energy into a lever motion, pulling 2 nucleotides of DNA out of the RuvA tetramer per ATP hydrolyzed, thus driving DNA branch migration. The RuvB motors rotate together with the DNA substrate, which together with the progressing nucleotide cycle form the mechanistic basis for DNA recombination by continuous HJ branch migration. Branch migration allows RuvC to scan DNA until it finds its consensus sequence, where it cleaves and resolves cruciform DNA. Its function is as follows. Promotes Holliday junction (HJ) branch migration in conjunction with RuvA. Subunits can be free, ADP- or ATP-bound; nucleotide binding changes during the reaction cycle. Has a DNA-dependent ATPase activity; dsDNA and supercoiled DNA but not ssDNA stimulate activity. This Thermotoga maritima (strain ATCC 43589 / DSM 3109 / JCM 10099 / NBRC 100826 / MSB8) protein is Holliday junction branch migration complex subunit RuvB.